The following is a 271-amino-acid chain: Solute carrier family 66 member 2 (271 aa).

A run of 3 helical transmembrane segments spans residues 8 to 28 (WLLV…MVFG), 49 to 69 (FSTY…LFWF), and 76 to 96 (PLLW…KLCT). In terms of domain architecture, PQ-loop 1 spans 14–80 (HQLVSWGAAA…RRFESPLLWQ (67 aa)). Serine 110 carries the phosphoserine modification. The next 3 membrane-spanning stretches (helical) occupy residues 145–165 (DYVQ…YLSI), 168–188 (ALFV…LGVP), and 232–252 (VCGL…YAFA). The 56-residue stretch at 178 to 233 (AVLTEAMLGVPQLYRNHRHQSTEGMSIKMVLMWTSGDAFKTAYFLLKGAPLQFSVC) folds into the PQ-loop 2 domain.

It is found in the membrane. This is Solute carrier family 66 member 2 from Homo sapiens (Human).